Here is a 271-residue protein sequence, read N- to C-terminus: Phosphatidylinositol transfer protein beta isoform (271 aa).

Residue Lys-215 is modified to N6-acetyllysine. The residue at position 262 (Ser-262) is a Phosphoserine.

Belongs to the PtdIns transfer protein family. PI transfer class I subfamily. Post-translationally, constitutive phosphorylation of Ser-262 has no effect on phospholipid transfer activity but is required for Golgi targeting.

It is found in the golgi apparatus. The protein resides in the golgi apparatus membrane. The protein localises to the endoplasmic reticulum membrane. It carries out the reaction a 1,2-diacyl-sn-glycero-3-phosphocholine(in) = a 1,2-diacyl-sn-glycero-3-phosphocholine(out). The enzyme catalyses a 1,2-diacyl-sn-glycero-3-phospho-(1D-myo-inositol)(in) = a 1,2-diacyl-sn-glycero-3-phospho-(1D-myo-inositol)(out). The catalysed reaction is an N-(acyl)-sphingosylphosphocholine(in) = an N-(acyl)-sphingosylphosphocholine(out). In terms of biological role, catalyzes the transfer of phosphatidylinositol, phosphatidylcholine and sphingomyelin between membranes. Required for COPI-mediated retrograde transport from the Golgi to the endoplasmic reticulum; phosphatidylinositol and phosphatidylcholine transfer activity is essential for this function. In Bos taurus (Bovine), this protein is Phosphatidylinositol transfer protein beta isoform (PITPNB).